The primary structure comprises 854 residues: MLMWPQPHLPTHPHLPTHPHLPTHPHLPTHPHLPTHPHLPTHPMMSKETRQSKLAEAKEQLTDHHPQTNPSVGTAASDTKKKKINNGTSPETTTSGGCHSPEDEQKASHQHQEALRRELEAQVHTIRILTCQKTELQMALYYSQHAVKQLEGEARDLISRLHDSWKFAGELEQALSAVTTQKKKADRYIEELTKERDALSLELYRNTITDEELKEKNAKLQEKLQLVESEKSEIQLNVKELKRKLERAKLLLPQQQLQAEADHLGKELQSVSAKLQAQVEENELWNRLNQQQEEKMWRQEEKIQEWEEKIQEQEEKIREQEEKIREQEEKMRRQEEMMWEKEEKMRRQEEMMWEKEEKIRELEEKMHEQEKIREQEEKRQEEEKIREQEKRQEQEAKMWRQEEKIREQEEKIREQEKKMWRQEEKIHEQEKIREEEKRQEQEEMWRQEEKIREQEEIWRQKEKMHEQEEKIRKQEEKVWRQEEKMHDQEEKIREQEEKVWRQEEKIREQEKKREQEEKMWRQEEKIREQEEKIREQEEMWREEEKMHEQEKIWEEEKRQEQEDKMWRQEEKIREQEEKVWRQEEKIREQEEKRQEQEEKMWKQEEKIREQEEKIREQEEKIREQEEKIREQEEMMQEQEEKMGEQEEKMQEQEKMRRQEEKIREQEEKIREQKEKIREQEEKIWEQEEKIREQEEMMQEQEEKMGEQEEKIWEQEEKMQEQEEKMRRQEEKIREQEKKIREQEEKIREQEEMMQEQEEKMGEQEEKMQEQEEKMRRQEEKIREQEKKIREQEEKIREQEEMMQEQEEKMWEQEEKMCEQEEKMQEQEEKMRRQEEKMWEQEVRLRQQEEKMQEH.

Disordered stretches follow at residues 1-114 (MLMW…HQEA), 320-348 (QEEKIREQEEKMRRQEEMMWEKEEKMRRQ), 366-447 (MHEQ…MWRQ), 481-568 (QEEK…MWRQ), 581-681 (RQEE…EQEE), and 714-854 (QEEK…MQEH). The span at 15-35 (LPTHPHLPTHPHLPTHPHLPT) shows a compositional bias: basic residues. Over residues 45–66 (MSKETRQSKLAEAKEQLTDHHP) the composition is skewed to basic and acidic residues. Composition is skewed to polar residues over residues 67–77 (QTNPSVGTAAS) and 85–97 (NNGTSPETTTSGG). Basic and acidic residues predominate over residues 100–114 (SPEDEQKASHQHQEA). The stretch at 103–854 (DEQKASHQHQ…RQQEEKMQEH (752 aa)) forms a coiled coil.

Belongs to the GOLGA6 family.

The sequence is that of Golgin subfamily A member 6-like protein 22 from Homo sapiens (Human).